The sequence spans 505 residues: Poxin-Schlafen (505 aa).

Residues 1-238 (MAMFYAHAFG…SKEERVDYVL (238 aa)) are poxin-like. The active-site Proton donor is the His17. Residue Tyr138 is the Shared with catalytic histidine of dimeric partner of the active site. Lys142 acts as the Proton acceptor; shared with catalytic histidine of dimeric partner in catalysis. A schlafen-like region spans residues 239–505 (MKRLESIRHL…PDEWVSHIKF (267 aa)).

It in the N-terminal section; belongs to the poxin family. The protein in the C-terminal section; belongs to the Schlafen protein family. Subgroup poxviridae B3 subfamily. Homodimer.

It carries out the reaction 2',3'-cGAMP + H2O = Gp(2'-5')Ap(3') + H(+). Functionally, nuclease that is responsible for viral evasion of host cGAS-STING innate immunity. Cleaves 2',3'-cGAMP which is produced by host cGAS following recognition of cytosolic DNA and blocks the subsequent 2',3'-cGAMP-mediated activation of TMEM173/STING, which normally spreads to adjacent cells and activates the interferon and NF-kappa-B immune responses. The chain is Poxin-Schlafen (OPG188) from Bos taurus (Bovine).